A 243-amino-acid chain; its full sequence is Exosome complex component Rrp41 (243 aa).

It belongs to the RNase PH family. Rrp41 subfamily. In terms of assembly, component of the archaeal exosome complex. Forms a hexameric ring-like arrangement composed of 3 Rrp41-Rrp42 heterodimers. The hexameric ring associates with a trimer of Rrp4 and/or Csl4 subunits.

It localises to the cytoplasm. Its function is as follows. Catalytic component of the exosome, which is a complex involved in RNA degradation. Has 3'-&gt;5' exoribonuclease activity. Can also synthesize heteromeric RNA-tails. This chain is Exosome complex component Rrp41, found in Sulfolobus acidocaldarius (strain ATCC 33909 / DSM 639 / JCM 8929 / NBRC 15157 / NCIMB 11770).